The primary structure comprises 227 residues: NAD(P)H-quinone oxidoreductase subunit K, chloroplastic (227 aa).

Positions 43, 44, 108, and 139 each coordinate [4Fe-4S] cluster.

Belongs to the complex I 20 kDa subunit family. In terms of assembly, NDH is composed of at least 16 different subunits, 5 of which are encoded in the nucleus. It depends on [4Fe-4S] cluster as a cofactor.

The protein resides in the plastid. The protein localises to the chloroplast thylakoid membrane. The catalysed reaction is a plastoquinone + NADH + (n+1) H(+)(in) = a plastoquinol + NAD(+) + n H(+)(out). The enzyme catalyses a plastoquinone + NADPH + (n+1) H(+)(in) = a plastoquinol + NADP(+) + n H(+)(out). Functionally, NDH shuttles electrons from NAD(P)H:plastoquinone, via FMN and iron-sulfur (Fe-S) centers, to quinones in the photosynthetic chain and possibly in a chloroplast respiratory chain. The immediate electron acceptor for the enzyme in this species is believed to be plastoquinone. Couples the redox reaction to proton translocation, and thus conserves the redox energy in a proton gradient. The chain is NAD(P)H-quinone oxidoreductase subunit K, chloroplastic from Pelargonium hortorum (Common geranium).